We begin with the raw amino-acid sequence, 88 residues long: HssA/B-like protein 13 (88 aa).

It belongs to the hssA/B family.

In Dictyostelium discoideum (Social amoeba), this protein is HssA/B-like protein 13 (hssl13).